A 218-amino-acid polypeptide reads, in one-letter code: GTP cyclohydrolase 1 (218 aa).

Zn(2+) contacts are provided by C109, H112, and C180.

Belongs to the GTP cyclohydrolase I family. As to quaternary structure, toroid-shaped homodecamer, composed of two pentamers of five dimers.

The catalysed reaction is GTP + H2O = 7,8-dihydroneopterin 3'-triphosphate + formate + H(+). Its pathway is cofactor biosynthesis; 7,8-dihydroneopterin triphosphate biosynthesis; 7,8-dihydroneopterin triphosphate from GTP: step 1/1. The protein is GTP cyclohydrolase 1 of Actinobacillus pleuropneumoniae serotype 5b (strain L20).